The primary structure comprises 291 residues: 4-diphosphocytidyl-2-C-methyl-D-erythritol kinase (291 aa).

Lysine 10 is a catalytic residue. Position 100–110 (100–110 (PIGGGLGGGSS)) interacts with ATP. Aspartate 142 is an active-site residue.

The protein belongs to the GHMP kinase family. IspE subfamily. Homodimer.

The enzyme catalyses 4-CDP-2-C-methyl-D-erythritol + ATP = 4-CDP-2-C-methyl-D-erythritol 2-phosphate + ADP + H(+). It participates in isoprenoid biosynthesis; isopentenyl diphosphate biosynthesis via DXP pathway; isopentenyl diphosphate from 1-deoxy-D-xylulose 5-phosphate: step 3/6. Catalyzes the phosphorylation of the position 2 hydroxy group of 4-diphosphocytidyl-2C-methyl-D-erythritol. In Hamiltonella defensa subsp. Acyrthosiphon pisum (strain 5AT), this protein is 4-diphosphocytidyl-2-C-methyl-D-erythritol kinase.